The sequence spans 550 residues: 4-coumarate--CoA ligase-like 8 (550 aa).

ATP is bound by residues serine 207, serine 208, glycine 209, threonine 210, threonine 211, and lysine 215. (E)-4-coumaroyl-AMP is bound at residue phenylalanine 253. Arginine 274 is a CoA binding site. An SBD1 region spans residues 276–347 (DLGEMMAAVE…KKYPTVDVYQ (72 aa)). (E)-4-coumaroyl-AMP contacts are provided by glycine 325, glutamine 347, glycine 348, and threonine 352. Glutamine 347, glycine 348, threonine 352, aspartate 430, and arginine 445 together coordinate ATP. Residues 348-412 (GYALTESNGA…LKGPSIAKGY (65 aa)) form an SBD2 region. (E)-4-coumaroyl-AMP contacts are provided by lysine 447 and lysine 451. Residues lysine 453 and glycine 454 each contribute to the CoA site. Lysine 536 serves as a coordination point for ATP. The Microbody targeting signal motif lies at 548–550 (SKI).

Belongs to the ATP-dependent AMP-binding enzyme family. Mg(2+) is required as a cofactor.

It is found in the peroxisome. The enzyme catalyses (E)-4-coumarate + ATP + CoA = (E)-4-coumaroyl-CoA + AMP + diphosphate. The catalysed reaction is (E)-4-coumarate + ATP + H(+) = (E)-4-coumaroyl-AMP + diphosphate. It carries out the reaction (E)-4-coumaroyl-AMP + CoA = (E)-4-coumaroyl-CoA + AMP + H(+). In terms of biological role, carboxylate--CoA ligase that may use 4-coumarate as substrate. Follows a two-step reaction mechanism, wherein the carboxylate substrate first undergoes adenylation by ATP, followed by a thioesterification in the presence of CoA to yield the final CoA thioester. The chain is 4-coumarate--CoA ligase-like 8 from Arabidopsis thaliana (Mouse-ear cress).